A 109-amino-acid polypeptide reads, in one-letter code: MKNKRVIKKNFEFQEIINYKKTIKNFCFIIYYKDNDQSYLKYGISVGKKIGNAVVRNKVKRQIRMILRQNINEIGTISKDVIILVRKSVLKLKYATLSKSLIKLIKEIK.

The protein belongs to the RnpA family. In terms of assembly, consists of a catalytic RNA component (M1 or rnpB) and a protein subunit.

The enzyme catalyses Endonucleolytic cleavage of RNA, removing 5'-extranucleotides from tRNA precursor.. In terms of biological role, RNaseP catalyzes the removal of the 5'-leader sequence from pre-tRNA to produce the mature 5'-terminus. It can also cleave other RNA substrates such as 4.5S RNA. The protein component plays an auxiliary but essential role in vivo by binding to the 5'-leader sequence and broadening the substrate specificity of the ribozyme. The polypeptide is Ribonuclease P protein component (Mycoplasma mycoides subsp. mycoides SC (strain CCUG 32753 / NCTC 10114 / PG1)).